The following is a 122-amino-acid chain: Urease subunit beta (122 aa).

The protein belongs to the urease beta subunit family. In terms of assembly, heterotrimer of UreA (gamma), UreB (beta) and UreC (alpha) subunits. Three heterotrimers associate to form the active enzyme.

The protein localises to the cytoplasm. It catalyses the reaction urea + 2 H2O + H(+) = hydrogencarbonate + 2 NH4(+). It functions in the pathway nitrogen metabolism; urea degradation; CO(2) and NH(3) from urea (urease route): step 1/1. The polypeptide is Urease subunit beta (Flavobacterium johnsoniae (strain ATCC 17061 / DSM 2064 / JCM 8514 / BCRC 14874 / CCUG 350202 / NBRC 14942 / NCIMB 11054 / UW101) (Cytophaga johnsonae)).